A 211-amino-acid polypeptide reads, in one-letter code: Urease accessory protein UreF (211 aa).

Positions Leu68–Gln93 are disordered.

This sequence belongs to the UreF family. In terms of assembly, ureD, UreF and UreG form a complex that acts as a GTP-hydrolysis-dependent molecular chaperone, activating the urease apoprotein by helping to assemble the nickel containing metallocenter of UreC. The UreE protein probably delivers the nickel.

It localises to the cytoplasm. Its function is as follows. Required for maturation of urease via the functional incorporation of the urease nickel metallocenter. This chain is Urease accessory protein UreF, found in Mycobacterium marinum (strain ATCC BAA-535 / M).